Consider the following 379-residue polypeptide: Protein COS2 (379 aa).

The Cytoplasmic segment spans residues 1–72 (MKENELKNEK…WKLSNNCIYP (72 aa)). A helical membrane pass occupies residues 73 to 93 (LIVSLLVLFLGPIFVLVICGL). Topologically, residues 94 to 254 (SRKRSLSKQL…FLCCIYVSRG (161 aa)) are extracellular. A helical membrane pass occupies residues 255-275 (MCLLLRTLYLGWILFMLVQGF). Residues 276–379 (QNIRVLIMSM…QLSRSEVLLV (104 aa)) are Cytoplasmic-facing.

This sequence belongs to the DUP/COS family.

The protein resides in the membrane. This Saccharomyces cerevisiae (strain ATCC 204508 / S288c) (Baker's yeast) protein is Protein COS2 (COS2).